Consider the following 144-residue polypeptide: Actin-associated protein FAM107A (144 aa).

A coiled-coil region spans residues 66–112 (ELQRVLEHRRRNQLIKKKKEELEAKRLQCPFEQELLRRQQRLNQLEK). The short motif at 74–84 (RRRNQLIKKKK) is the Nuclear localization signal element. Residues 105–124 (QRLNQLEKPPEKEEDHAPEF) are disordered. The segment covering 112–124 (KPPEKEEDHAPEF) has biased composition (basic and acidic residues).

It belongs to the FAM107 family. As to quaternary structure, interacts with ACTB. Interacts with COMMD1; this interaction stabilizes COMMD1 in the nucleus. Interacts with MAP1A. Interacts with PRDX1. Interacts with F-actin. Widely expressed. Expressed in neurons. Expressed in malignant glial tumors. Expression is reduced or absent in a number of cancer cell lines.

It is found in the nucleus. The protein resides in the cytoplasm. The protein localises to the cytoskeleton. It localises to the stress fiber. Its subcellular location is the cell junction. It is found in the focal adhesion. The protein resides in the cell projection. The protein localises to the ruffle membrane. It localises to the synapse. Functionally, stress-inducible actin-binding protein that plays a role in synaptic and cognitive functions by modulating actin filamentous (F-actin) dynamics. Mediates polymerization of globular actin to F-actin. Also binds to, stabilizes and bundles F-actin. Involved in synaptic function by regulating neurite outgrowth in an actin-dependent manner and for the acquisition of hippocampus-dependent cognitive function, such as learning and long-term memory. Plays a role in the actin and microtubule cytoskeleton organization; negatively regulates focal adhesion (FA) assembly promoting malignant glial cell migration in an actin-, microtubule- and MAP1A-dependent manner. Also involved in neuroblastoma G1/S phase cell cycle progression and cell proliferation inhibition by stimulating ubiquitination of NF-kappa-B subunit RELA and NF-kappa-B degradation in a COMMD1- and actin-dependent manner. May play a role in tumor development. This chain is Actin-associated protein FAM107A, found in Homo sapiens (Human).